Here is a 417-residue protein sequence, read N- to C-terminus: MFRRLLIATLIGILAALAVAAFRHAMQLLEWIFLSNDTGSLVNAAEGLSPWRRLITPALGGLAAGLLLWGWQKMNQQRPHAPTDYMEALQTDGQFDVGASLVKSLASLLVVVSGSAIGREGAMILLAALAASSFARRFTPREEWKLWIASGAAAGMAGAYHAPLAGSLFIAEILFGTLMLASLGPVVVSAVVALLTTHVLNGSDSLLYTVHLTVDLYAREYVMIVSTGLVAGLWGPLLMWLMTASHNSFLRLKLSPPWQLALGGLIVGLLSLLTPTVWGNGYSVVQSFLLSPPLFSLIGGIFACKILAVLASSGSGAPGGVFTPTLFVGLSIGMFLGRIWGFWLPGSDEIAILLGLAGMATLLAATTHAPIMSTLMICEMTGEYQLLPGLLIACVVASVLSRTLRHDSIYRQHAAEH.

Topologically, residues 1 to 4 (MFRR) are cytoplasmic. The chain crosses the membrane as a helical span at residues 5 to 25 (LLIATLIGILAALAVAAFRHA). The Periplasmic segment spans residues 26–53 (MQLLEWIFLSNDTGSLVNAAEGLSPWRR). The chain crosses the membrane as a helical span at residues 54–74 (LITPALGGLAAGLLLWGWQKM). Residues 75–145 (NQQRPHAPTD…RRFTPREEWK (71 aa)) lie on the Cytoplasmic side of the membrane. Residues 146–166 (LWIASGAAAGMAGAYHAPLAG) traverse the membrane as a helical segment. At 167–172 (SLFIAE) the chain is on the periplasmic side. A helical transmembrane segment spans residues 173 to 195 (ILFGTLMLASLGPVVVSAVVALL). At 196–221 (TTHVLNGSDSLLYTVHLTVDLYAREY) the chain is on the cytoplasmic side. Residues 222 to 242 (VMIVSTGLVAGLWGPLLMWLM) form a helical membrane-spanning segment. The Periplasmic portion of the chain corresponds to 243-257 (TASHNSFLRLKLSPP). The chain crosses the membrane as a helical span at residues 258-278 (WQLALGGLIVGLLSLLTPTVW). The Cytoplasmic segment spans residues 279-287 (GNGYSVVQS). A helical transmembrane segment spans residues 288 to 308 (FLLSPPLFSLIGGIFACKILA). The Periplasmic portion of the chain corresponds to 309 to 315 (VLASSGS). The helical transmembrane segment at 316–336 (GAPGGVFTPTLFVGLSIGMFL) threads the bilayer. Over 337–338 (GR) the chain is Cytoplasmic. The chain crosses the membrane as a helical span at residues 339 to 359 (IWGFWLPGSDEIAILLGLAGM). Topologically, residues 360–379 (ATLLAATTHAPIMSTLMICE) are periplasmic. A helical membrane pass occupies residues 380–400 (MTGEYQLLPGLLIACVVASVL). The Cytoplasmic portion of the chain corresponds to 401 to 417 (SRTLRHDSIYRQHAAEH).

This sequence belongs to the chloride channel (TC 2.A.49) family. ClcB subfamily.

It localises to the cell inner membrane. In terms of biological role, probably acts as an electrical shunt for an outwardly-directed proton pump that is linked to amino acid decarboxylation, as part of the extreme acid resistance (XAR) response. The polypeptide is Voltage-gated ClC-type chloride channel ClcB (clcB) (Salmonella typhi).